Consider the following 241-residue polypeptide: MEAAADGPAETQSPVKKDSPAKTQSPAQDTSIMSRNNADTGRVLALPEHKKKRKGNLPAESVKILRDWMYKHRFKAYPSEEEKQMLSEKTNLSLLQISNWFINARRRILPDMLQQRRNDPIIGHKTGKDAHATHLQSTKASVPAKSGPSGPDNVQSLPLWPLPKGQMSGEKQPDPESAPSQKLTRIAQPKKKVKVSITSPSSPEPVSPEEYADFSSFLLLVDAAVQRAAELELEKKQEPNP.

Disordered regions lie at residues 1–58 (MEAA…GNLP) and 126–209 (TGKD…VSPE). The segment covering 21-39 (AKTQSPAQDTSIMSRNNAD) has biased composition (polar residues). The segment at residues 48 to 111 (EHKKKRKGNL…INARRRILPD (64 aa)) is a DNA-binding region (homeobox; TALE-type).

Belongs to the TALE/TGIF homeobox family.

It is found in the nucleus. In terms of biological role, may have a transcription role in testis. This chain is Homeobox protein TGIF2LX (TGIF2LX), found in Gorilla gorilla gorilla (Western lowland gorilla).